A 932-amino-acid polypeptide reads, in one-letter code: PMS1 protein homolog 1 (932 aa).

The segment at 465–493 is disordered; that stretch reads TQSENGNKDHIDESGENEEEAGLENSSEI. The HMG box DNA-binding region spans 571–639; it reads IKKPMSASAL…RYNSQMKRAI (69 aa).

Belongs to the DNA mismatch repair MutL/HexB family. As to quaternary structure, component of the DNA mismatch repair (MMR) complex composed at least of MSH2, MSH3, MSH6, PMS1 and MLH1. The MutL-beta complex is a heterodimer of PMS1 and MLH1. Interacts with MCM9.

It localises to the nucleus. Functionally, probably involved in the repair of mismatches in DNA. This Homo sapiens (Human) protein is PMS1 protein homolog 1 (PMS1).